The chain runs to 548 residues: Fumarate hydratase class I, aerobic (548 aa).

[4Fe-4S] cluster is bound by residues Cys105, Cys224, and Cys318.

This sequence belongs to the class-I fumarase family. Homodimer. [4Fe-4S] cluster is required as a cofactor.

It catalyses the reaction (S)-malate = fumarate + H2O. The enzyme catalyses oxaloacetate = enol-oxaloacetate. Its pathway is carbohydrate metabolism; tricarboxylic acid cycle; (S)-malate from fumarate: step 1/1. Functionally, catalyzes the reversible hydration of fumarate to (S)-malate. Functions as an aerobic enzyme in the direction of malate formation as part of the citric acid cycle. Accounts for about 80% of the fumarase activity when the bacteria grow aerobically. To a lesser extent, also displays D-tartrate dehydratase activity in vitro, but is not able to convert (R)-malate, L-tartrate or meso-tartrate. Can also catalyze the isomerization of enol- to keto-oxaloacetate. The protein is Fumarate hydratase class I, aerobic of Escherichia coli O6:H1 (strain CFT073 / ATCC 700928 / UPEC).